The chain runs to 551 residues: Harmonin (551 aa).

Residues 1 to 86 (MDRKVAREFR…LTPRRSRKLK (86 aa)) are N-terminal domain. PDZ domains lie at 87-169 (EVRL…HIGL) and 211-293 (KVFI…AGAG). Positions 194–532 (GGRSSLGSPG…QKAWNQGDWI (339 aa)) are mediates interaction with MYO7B. The residue at position 219 (serine 219) is a Phosphoserine. The stretch at 318–377 (LMQKRLAMESNKILQEQQEMERQRKKEIAQKAAEENERYRKEMEQIVEEEEKFRKQWEED) forms a coiled coil. Residues 401–425 (KPKYDLGVDPEFDPADDLDGGTNKR) are disordered. The span at 408–419 (VDPEFDPADDLD) shows a compositional bias: acidic residues. Residues 452–536 (DVRLLRVKKE…NQGDWIDLVV (85 aa)) enclose the PDZ 3 domain.

In terms of assembly, part of the IMAC/intermicrovillar adhesion complex/intermicrovillar tip-link complex composed of ANKS4B, MYO7B, USH1C, CDHR2 and CDHR5. Part of a complex composed of USH1C, USH1G and MYO7A. Interacts with F-actin. Interacts with USH2A. Interacts with SLC4A7. Interacts (via PDZ1 domain) with the C-terminus of USHBP1. Interacts (via N-terminus and PDZ 2 domain) with CDH23. Interacts with USH1G. Interacts with MYO7B. Interacts with CDHR2 and CDHR5; may mediate their interaction with MYO7B at the microvilli tip. Interacts (via PDZ 1 domain) with ANKS4B. Interacts (via PDZ 1 domain) with DOCK4.

It localises to the cytoplasm. Its subcellular location is the cytosol. The protein localises to the cytoskeleton. The protein resides in the cell projection. It is found in the microvillus. In terms of biological role, anchoring/scaffolding protein that is a part of the functional network formed by USH1C, USH1G, CDH23 and MYO7A that mediates mechanotransduction in cochlear hair cells. Required for normal development and maintenance of cochlear hair cell bundles. As part of the intermicrovillar adhesion complex/IMAC plays a role in brush border differentiation, controlling microvilli organization and length. Probably plays a central regulatory role in the assembly of the complex, recruiting CDHR2, CDHR5 and MYO7B to the microvilli tips. In Bos taurus (Bovine), this protein is Harmonin (USH1C).